A 375-amino-acid polypeptide reads, in one-letter code: MIIILIFLIIPNIVLSIDYWVSFNKTIILDSNITNDNNDINGVSWNFLNNSLNTLATCGKAGNFCECSNYSTSLYNIAHNCSLTIFPHNDVFGTPYQVVWNQIINYTIKLLTPVTPPNITYNCTNFLITCKKNNGTNTIIYFNINDTNVKYTNESILEYNWNNSNFNNFTATCIINNTINSSNDTQTIDCINTLLSSYLDFFQVASYMFYMIIFIATGIIASIFISIITFLSLRKRKKHVEEIESPSPSESNEEEQCQHDDTTSIHEPSPREPLLPKPYSRYQYNTPIYYMRPLTQPLNPSPLPKLCPPPKPCPPPKPCPPPKPCPPPKPCPSSESCSPPESYSLPKPLPNIPLLPNIPPLSTQNISLIHVDRII.

An N-terminal signal peptide occupies residues 1-16 (MIIILIFLIIPNIVLS). Over 17–207 (IDYWVSFNKT…YLDFFQVASY (191 aa)) the chain is Extracellular. 9 N-linked (GlcNAc...) asparagine; by host glycosylation sites follow: Asn-24, Asn-80, Asn-105, Asn-122, Asn-134, Asn-145, Asn-168, Asn-176, and Asn-183. 2 disulfides stabilise this stretch: Cys-123–Cys-190 and Cys-130–Cys-173. Residues 208 to 228 (MFYMIIFIATGIIASIFISII) traverse the membrane as a helical segment. Residues 229-375 (TFLSLRKRKK…ISLIHVDRII (147 aa)) are Cytoplasmic-facing. Residues 242-278 (EIESPSPSESNEEEQCQHDDTTSIHEPSPREPLLPKP) form a disordered region. Positions 256 to 270 (QCQHDDTTSIHEPSP) are enriched in basic and acidic residues. Repeat copies occupy residues 305-310 (KLCPPP), 311-316 (KPCPPP), 317-322 (KPCPPP), 323-328 (KPCPPP), and 329-334 (KPCPSS). The segment at 305 to 334 (KLCPPPKPCPPPKPCPPPKPCPPPKPCPSS) is 5 X 6 AA tandem repeats of K-[LP]-C-[PRS]-[PS]-[PS]. A disordered region spans residues 323–350 (KPCPPPKPCPSSESCSPPESYSLPKPLP). Residues 332–346 (PSSESCSPPESYSLP) show a composition bias toward low complexity.

It belongs to the asfivirus CD2 homolog protein family. Both glycosylated and nonglycosylated forms interact (via C-terminus) with the host AP-1 complex. Post-translationally, cleaved into two fragments of 63 kDa and 26 kDa containing respectively the glycosylated N-terminus and the nonglycosylated C-terminus. A full-length 89-kDa glycosylated form also exists.

Its subcellular location is the host membrane. It localises to the virion membrane. The protein localises to the host Golgi apparatus. May play an immunosuppressive role by inhibiting lymphocyte proliferation and subsequently facilitating viral replication and generalization of infection. Responsible for viral hemadsorption, which may help viral spread. Increases virus replication in the tick vector at the step of virus uptake or replication in the tick gut. May play a role in the host Golgi reorganization to yield viral factories. May play a role in host cell penetration. The protein is CD2 homolog of Ornithodoros (relapsing fever ticks).